The chain runs to 529 residues: CRISPR-associated endodeoxyribonuclease Cas12f1 (529 aa).

Residues 1–95 (MAKNTITKTL…RGQFPDAVFW (95 aa)) are zinc finger domain (ZF). Zn(2+) contacts are provided by C50, H53, C69, and C72. Residues 96 to 192 (QEISEIFRQL…PTTKSDNFPI (97 aa)) are recognition domain (REC). Residues 193–312 (PLVKQKGGQY…MLNLSIDVPK (120 aa)) are wedge domain (WED). Residues 313 to 321 (IDKGVDPSI) are linker. The segment at 322–473 (IGGIDVGVKS…RKVAPNNTSK (152 aa)) is ruvC-I. Residues D326 and E422 contribute to the active site. The segment at 474 to 508 (TCSKCGHLNNYFNFEYRKKNKFPHFKCEKCNFKEN) is target nucleic acid-binding (TNB). Positions 475 and 478 each coordinate Zn(2+). The active site involves R490. The Zn(2+) site is built by C500 and C503. Residues 509-529 (ADYNAALNISNPKLKSTKEEP) are ruvC-II. D510 is a catalytic residue.

Belongs to the CRISPR-associated endonuclease Cas12f family. An asymmetric homodimer. Guide RNA is probably required for dimerization. Mg(2+) is required as a cofactor. Requires Zn(2+) as cofactor.

Target ssDNA cleavage is inhibited by EDTA. Activity is maximal with 5-50 mM NaCl, is less efficient at higher NaCl concentrations. In terms of biological role, CRISPR (clustered regularly interspaced short palindromic repeat), is an adaptive immune system that provides protection against mobile genetic elements (viruses, transposable elements and conjugative plasmids). CRISPR clusters contain sequences complementary to antecedent mobile elements and target invading nucleic acids. CRISPR clusters are transcribed and processed into CRISPR RNA (crRNA), which requires a trans-encoded small RNA (tracrRNA), but not this protein (in vitro). Upon expression in E.coli of this protein, a mini CRISPR array and the probable tracrRNA, the protein associates with both RNAs. The mini system is not active in E.coli against phiX174 phage, nor is it active in protection against transformation by foreign plasmids. In vitro the purified protein-tracrRNA-crRNA complex cleaves ssDNA complementary to the crRNA; target cleavage requires both tracrRNA and crRNA, but not a protospacer adjacent motif (PAM). The tracrRNA-crRNA can be replaced by a single guide RNA (sgRNA). 2-nucleotide mismatches in the middle of the crRNA:DNA heteroduplex decrease cleavage. Cleavage occurs just downstream of the heteroduplex. Activation of this protein results in non-specific ssDNA degradation in vitro. In vitro and in E.coli (coexpressed with sgRNA) has dsDNA endonuclease activity, recognizing the 5' PAM sequence TTTR; both sgRNA and a PAM are required for activity. Cleaves the target strand 24 and the nontarget strand 22 bases upstream of the PAM (respectively), resulting in 5' overhangs. The 2 monomers interact differently with the sgRNA and target DNA. Mutagenesis of a dimeric construct shows that one of the RuvC monomers probably cleaves both DNA strands. In Uncultured archaeon, this protein is CRISPR-associated endodeoxyribonuclease Cas12f1.